The primary structure comprises 228 residues: Sec-independent protein translocase protein TatB (228 aa).

Residues 1–21 (MFDFGLGELIFVGIIALIVLG) form a helical membrane-spanning segment. Disordered stretches follow at residues 106–164 (TPAD…TDKD) and 196–228 (VPHT…VRKS). The span at 135-151 (PSERSDTSAETLGDDRQ) shows a compositional bias: basic and acidic residues. A compositionally biased stretch (basic residues) spans 206–228 (AINRKRDFRPKHRAKPKLRVRKS).

This sequence belongs to the TatB family. The Tat system comprises two distinct complexes: a TatABC complex, containing multiple copies of TatA, TatB and TatC subunits, and a separate TatA complex, containing only TatA subunits. Substrates initially bind to the TatABC complex, which probably triggers association of the separate TatA complex to form the active translocon.

Its subcellular location is the cell inner membrane. Its function is as follows. Part of the twin-arginine translocation (Tat) system that transports large folded proteins containing a characteristic twin-arginine motif in their signal peptide across membranes. Together with TatC, TatB is part of a receptor directly interacting with Tat signal peptides. TatB may form an oligomeric binding site that transiently accommodates folded Tat precursor proteins before their translocation. This is Sec-independent protein translocase protein TatB from Neisseria gonorrhoeae (strain ATCC 700825 / FA 1090).